The primary structure comprises 273 residues: Translation initiation factor 2 subunit alpha (273 aa).

An S1 motif domain is found at 12–83; that stretch reads GEFVVATVKN…EKGHIDLSLK (72 aa).

It belongs to the eIF-2-alpha family. In terms of assembly, heterotrimer composed of an alpha, a beta and a gamma chain.

Its function is as follows. eIF-2 functions in the early steps of protein synthesis by forming a ternary complex with GTP and initiator tRNA. This chain is Translation initiation factor 2 subunit alpha, found in Thermococcus gammatolerans (strain DSM 15229 / JCM 11827 / EJ3).